A 256-amino-acid polypeptide reads, in one-letter code: MAVGKNKRLSKGKKGIKKKVVDPFSRKDWYDIKAPSIFDVRNVGKTLVNRSQGLKNANDSLKGRIIEVSLGDLNKEEEQSFRKIKLRVDEVQGKNCLTNFHGMDFTSDKLRSLVRKWQTLIEAHVDVKTTDGYLLRLFAIGFTKRRPTQVRKTTYAQSSQVREIRKKMFEIMTREATNCDLKELVQKFVPEAIGREIEKASRSIYPLQNVYVRKAKILKAPKFDVSKLMELHGESTDETGTKIAKDFKEPEVLESV.

N-acetylalanine; partial is present on alanine 2.

The protein belongs to the eukaryotic ribosomal protein eS1 family. As to quaternary structure, component of the small ribosomal subunit. Mature ribosomes consist of a small (40S) and a large (60S) subunit. The 40S subunit contains about 33 different proteins and 1 molecule of RNA (18S). The 60S subunit contains about 49 different proteins and 3 molecules of RNA (25S, 5.8S and 5S).

Its subcellular location is the cytoplasm. This chain is Small ribosomal subunit protein eS1, found in Lentinula edodes (Shiitake mushroom).